The sequence spans 783 residues: MKKFNQTFSSVKDLIGNKKETLTEFPDYIYKTKSLEDLKGYTRTLNLKLTKHSKTNQLLIEENKQLSEQILLYSNLFINNEESSLNVCEPLSNVFKIVGEMINEIENYRQTFEQSISQKWLQQLNEYGKSDCKDGQLAKNRFDKARLSFDEASEQFKQLRKKQNNINNEKLLEAEEDLDYATQQFSDIASESLQTMDDIIVKHNLDSFESASSTIQSYKDFFQKGLDHCLSVQSDLEIQKHAMSKYKQQLLEKKKLRSTVVQFEQTNSSRTISLPPPPPPKPTSSTPSSSPSPSPSSSIINIHNNYIAMPKGNTKVFGMALSTITEREKSDIPMIIDKSIQFLLLEENITQEGIFRVSPNQKQLTDLKNNVNAGYITTLDGIDDAHLISSFVKAFLREMPIPLFTFDLYHSLVDCVINEEKYDCDKIKISNAIVLVLQKLPKPNFLLAKSLISLLWKISTKSSQNKMTTSNLAVTVAPNVLYPKLLDIRSLTNANATIEFIISNFNNIFNNQLISNLYNNSCGVSGGSSGGGGGGGSSGGVANPRHSVLPPSLPARPQSVMFKNTPLSVNTSSSQSSSSSSSSSFASSASPPPTPTKPPSSSSSPIITTTSPNSNTNINSNTSVNTNINPRHSVLPPSLPPKKISSSSNSLPSPPPPSSPSIPEKSQNNITPTILSSSLSAPTSPTTTTTTNPLRSSTGSPKPISNRVSMYLQNSNTGVPLPSQKPQRVISNNNTTTNSRPLSNSLDLPPPLAPVGMPLETLEPIQRNLTSNEAITISEVNWN.

A coiled-coil region spans residues 138–188 (AKNRFDKARLSFDEASEQFKQLRKKQNNINNEKLLEAEEDLDYATQQFSDI). The tract at residues 262 to 299 (QFEQTNSSRTISLPPPPPPKPTSSTPSSSPSPSPSSSI) is disordered. Over residues 283 to 299 (TSSTPSSSPSPSPSSSI) the composition is skewed to low complexity. The Rho-GAP domain occupies 319–509 (MALSTITERE…FIISNFNNIF (191 aa)). The span at 527–539 (GSSGGGGGGGSSG) shows a compositional bias: gly residues. The tract at residues 527–745 (GSSGGGGGGG…TTNSRPLSNS (219 aa)) is disordered. Composition is skewed to low complexity over residues 568 to 589 (SVNT…ASSA), 599 to 630 (PSSS…NINP), 641 to 651 (PKKISSSSNSL), and 661 to 698 (SIPE…RSST). Residues 706-738 (NRVSMYLQNSNTGVPLPSQKPQRVISNNNTTTN) are compositionally biased toward polar residues.

It localises to the cytoplasm. In terms of biological role, rho GTPase-activating protein involved in the signal transduction pathway. This Dictyostelium discoideum (Social amoeba) protein is Rho GTPase-activating protein gacR (gacR).